The primary structure comprises 134 residues: Small ribosomal subunit protein uS11 (134 aa).

Belongs to the universal ribosomal protein uS11 family. Part of the 30S ribosomal subunit. Interacts with proteins S7 and S18. Binds to IF-3.

Functionally, located on the platform of the 30S subunit, it bridges several disparate RNA helices of the 16S rRNA. Forms part of the Shine-Dalgarno cleft in the 70S ribosome. This Acidovorax ebreus (strain TPSY) (Diaphorobacter sp. (strain TPSY)) protein is Small ribosomal subunit protein uS11.